A 231-amino-acid chain; its full sequence is Vacuolar protein sorting-associated protein 24 (231 aa).

Residues 184–195 show a composition bias toward basic and acidic residues; the sequence is KAADAATHREQS. The segment at 184 to 214 is disordered; that stretch reads KAADAATHREQSLKQALPSLSNGIAKDSTEI.

Belongs to the SNF7 family. In terms of assembly, component of the endosomal sorting required for transport complex III (ESCRT-III).

The protein resides in the endosome membrane. The protein localises to the endomembrane system. Class E VPS protein implicated in concentration and sorting of cargo proteins of the multivesicular body (MVB) for incorporation into intralumenal vesicles. The lumenal sequestrated membrane proteins will be targeted into the vacuole after fusion of the endosome with the vacuole. The chain is Vacuolar protein sorting-associated protein 24 (vps24) from Schizosaccharomyces pombe (strain 972 / ATCC 24843) (Fission yeast).